The primary structure comprises 277 residues: Large ribosomal subunit protein uL2 (277 aa).

Positions 218-277 (PTVRGSVMNPNDHPHGGGEGKSPIGHPSPLTPWGKPALGYKTRKNKKYSDGMIIKRRGQK) are disordered.

It belongs to the universal ribosomal protein uL2 family. In terms of assembly, part of the 50S ribosomal subunit. Forms a bridge to the 30S subunit in the 70S ribosome.

Functionally, one of the primary rRNA binding proteins. Required for association of the 30S and 50S subunits to form the 70S ribosome, for tRNA binding and peptide bond formation. It has been suggested to have peptidyltransferase activity; this is somewhat controversial. Makes several contacts with the 16S rRNA in the 70S ribosome. In Clostridium novyi (strain NT), this protein is Large ribosomal subunit protein uL2.